The following is a 187-amino-acid chain: MSDQSTIAAAITCLAQGEVILYPTEAVYGLGCDPDNQQAVERLLAIKQRPVEKGLILIADNYGQLLKYVDDAKIPMDKRADIFSSWPNAITWVMPAAKNTPKWLTGQYDTIAVRVTNHPTVKRLCQEFGKPLVSTSANLSGQNTVLSIAEAKSQFTEQIGYYVDEPLGGNTQPSTIKDAMNGKVFRG.

In terms of domain architecture, YrdC-like spans 4–187; the sequence is QSTIAAAITC…DAMNGKVFRG (184 aa).

This sequence belongs to the SUA5 family. TsaC subfamily.

Its subcellular location is the cytoplasm. The enzyme catalyses L-threonine + hydrogencarbonate + ATP = L-threonylcarbamoyladenylate + diphosphate + H2O. Functionally, required for the formation of a threonylcarbamoyl group on adenosine at position 37 (t(6)A37) in tRNAs that read codons beginning with adenine. Catalyzes the conversion of L-threonine, HCO(3)(-)/CO(2) and ATP to give threonylcarbamoyl-AMP (TC-AMP) as the acyladenylate intermediate, with the release of diphosphate. This is Threonylcarbamoyl-AMP synthase from Pseudoalteromonas translucida (strain TAC 125).